Reading from the N-terminus, the 428-residue chain is Cysteine synthase 2 (428 aa).

A helical membrane pass occupies residues 7-27; it reads IYIGSAFVAGVVLTIAFKDLF. At lysine 106 the chain carries N6-(pyridoxal phosphate)lysine. Residues 260–264 and serine 367 each bind pyridoxal 5'-phosphate; that span reads GTGGT.

It belongs to the cysteine synthase/cystathionine beta-synthase family. Requires pyridoxal 5'-phosphate as cofactor.

The protein resides in the mitochondrion outer membrane. The catalysed reaction is O-acetyl-L-serine + hydrogen sulfide = L-cysteine + acetate. Its function is as follows. Putative cysteine synthase that catalyzes the conversion of O-acetyl-L-serine (OAS) into cysteine, the last step in the cysteine biosynthesis pathway. However, in contrast to cysteine synthase cysB, this CS-like protein seems not to function in cysteine biosynthesis. This Emericella nidulans (strain FGSC A4 / ATCC 38163 / CBS 112.46 / NRRL 194 / M139) (Aspergillus nidulans) protein is Cysteine synthase 2.